Consider the following 170-residue polypeptide: uncharacterized protein (170 aa).

A run of 3 helical transmembrane segments spans residues 31 to 51 (ILAVVNGSITIILSIIVFYIF), 58 to 78 (LFLITAGILTVFVFLYGLLLF), and 133 to 153 (IDFIVMIGMITISVIVVMLLF).

The protein to M.jannaschii MJ0554 and MJ0587.

The protein localises to the cell membrane. This is an uncharacterized protein from Methanocaldococcus jannaschii (strain ATCC 43067 / DSM 2661 / JAL-1 / JCM 10045 / NBRC 100440) (Methanococcus jannaschii).